The primary structure comprises 265 residues: MIKWPWKVQESAHQTALPWQEALSIPLLTCLTEQEQSKLVTLAERFLQQKRLLPLQGFELDSLRSCRIALLFCLPVLELGLEWLDGFHEVLIYPAPFVVDDEWEDDIGLVHNQRIVQSGQSWQQGPIVLNWLDIQDSFDASGFNLIIHEVAHKLDTRNGDRASGVPFIPLREVAGWEYDLHAAMNNIQEEIELVGENAASIDAYAASDPAECFAVLSEYFFSAPELFAPRFPSLWQRFCQFYQQDPLQRLHHANDTDSFSTTNVH.

Residues histidine 111, histidine 148, histidine 152, and glutamate 211 each contribute to the Zn(2+) site.

The protein belongs to the MtfA family. In terms of assembly, interacts with Mlc. Zn(2+) is required as a cofactor.

The protein localises to the cytoplasm. Its function is as follows. Involved in the modulation of the activity of the glucose-phosphotransferase system (glucose-PTS). Interacts with the transcriptional repressor Mlc, preventing its interaction with DNA and leading to the modulation of expression of genes regulated by Mlc, including ptsG, which encodes the PTS system glucose-specific EIICB component. In terms of biological role, shows zinc-dependent metallopeptidase activity. The chain is Mlc titration factor A from Escherichia coli O17:K52:H18 (strain UMN026 / ExPEC).